A 90-amino-acid polypeptide reads, in one-letter code: Probable Fe(2+)-trafficking protein (90 aa).

It belongs to the Fe(2+)-trafficking protein family.

Could be a mediator in iron transactions between iron acquisition and iron-requiring processes, such as synthesis and/or repair of Fe-S clusters in biosynthetic enzymes. The sequence is that of Probable Fe(2+)-trafficking protein from Azotobacter vinelandii (strain DJ / ATCC BAA-1303).